Consider the following 696-residue polypeptide: Glycine--tRNA ligase beta subunit (696 aa).

This sequence belongs to the class-II aminoacyl-tRNA synthetase family. Tetramer of two alpha and two beta subunits.

The protein localises to the cytoplasm. It catalyses the reaction tRNA(Gly) + glycine + ATP = glycyl-tRNA(Gly) + AMP + diphosphate. The sequence is that of Glycine--tRNA ligase beta subunit from Nitratidesulfovibrio vulgaris (strain DP4) (Desulfovibrio vulgaris).